Here is a 241-residue protein sequence, read N- to C-terminus: Sec-independent protein translocase protein TatC (241 aa).

A run of 6 helical transmembrane segments spans residues 27–47 (LIIVIAVTLLLMLAIFPFSAG), 76–96 (LTMCFIGAITVGFPLLVYEAF), 122–142 (FVAGGLVAYFVTLPLFFSIVI), 161–181 (IVTNFVAGLGLVFQVPLIIVL), 193–213 (LVKGRLGVYGLLFGVAMFFSP), and 217–237 (LFSQLIVLAVLAILFEVSMVL).

Belongs to the TatC family. As to quaternary structure, forms a complex with TatA.

The protein localises to the cell membrane. Its function is as follows. Part of the twin-arginine translocation (Tat) system that transports large folded proteins containing a characteristic twin-arginine motif in their signal peptide across membranes. This chain is Sec-independent protein translocase protein TatC, found in Methanocella arvoryzae (strain DSM 22066 / NBRC 105507 / MRE50).